Reading from the N-terminus, the 274-residue chain is Dermonecrotic toxin SaSicTox-betaIIB1 (274 aa).

Histidine 5 is an active-site residue. Residues glutamate 25 and aspartate 27 each contribute to the Mg(2+) site. Histidine 41 serves as the catalytic Nucleophile. Disulfide bonds link cysteine 45/cysteine 51 and cysteine 47/cysteine 190. Residue aspartate 85 participates in Mg(2+) binding.

The protein belongs to the arthropod phospholipase D family. Class II subfamily. Requires Mg(2+) as cofactor. As to expression, expressed by the venom gland.

The protein resides in the secreted. It catalyses the reaction an N-(acyl)-sphingosylphosphocholine = an N-(acyl)-sphingosyl-1,3-cyclic phosphate + choline. It carries out the reaction an N-(acyl)-sphingosylphosphoethanolamine = an N-(acyl)-sphingosyl-1,3-cyclic phosphate + ethanolamine. The enzyme catalyses a 1-acyl-sn-glycero-3-phosphocholine = a 1-acyl-sn-glycero-2,3-cyclic phosphate + choline. The catalysed reaction is a 1-acyl-sn-glycero-3-phosphoethanolamine = a 1-acyl-sn-glycero-2,3-cyclic phosphate + ethanolamine. Dermonecrotic toxins cleave the phosphodiester linkage between the phosphate and headgroup of certain phospholipids (sphingolipid and lysolipid substrates), forming an alcohol (often choline) and a cyclic phosphate. This toxin acts on sphingomyelin (SM). It may also act on ceramide phosphoethanolamine (CPE), lysophosphatidylcholine (LPC) and lysophosphatidylethanolamine (LPE), but not on lysophosphatidylserine (LPS), and lysophosphatidylglycerol (LPG). It acts by transphosphatidylation, releasing exclusively cyclic phosphate products as second products. Induces dermonecrosis, hemolysis, increased vascular permeability, edema, inflammatory response, and platelet aggregation. This is Dermonecrotic toxin SaSicTox-betaIIB1 from Sicarius albospinosus (Six-eyed crab spider).